The sequence spans 449 residues: Probable glycine dehydrogenase (decarboxylating) subunit 1 (449 aa).

This sequence belongs to the GcvP family. N-terminal subunit subfamily. As to quaternary structure, the glycine cleavage system is composed of four proteins: P, T, L and H. In this organism, the P 'protein' is a heterodimer of two subunits.

The enzyme catalyses N(6)-[(R)-lipoyl]-L-lysyl-[glycine-cleavage complex H protein] + glycine + H(+) = N(6)-[(R)-S(8)-aminomethyldihydrolipoyl]-L-lysyl-[glycine-cleavage complex H protein] + CO2. In terms of biological role, the glycine cleavage system catalyzes the degradation of glycine. The P protein binds the alpha-amino group of glycine through its pyridoxal phosphate cofactor; CO(2) is released and the remaining methylamine moiety is then transferred to the lipoamide cofactor of the H protein. In Rhodospirillum centenum (strain ATCC 51521 / SW), this protein is Probable glycine dehydrogenase (decarboxylating) subunit 1.